Consider the following 187-residue polypeptide: dCTP deaminase (187 aa).

Residues 110 to 115 (KSTYAR), 134 to 136 (TLE), Gln155, Tyr169, and Gln179 each bind dCTP. Glu136 serves as the catalytic Proton donor/acceptor.

It belongs to the dCTP deaminase family. In terms of assembly, homotrimer.

The catalysed reaction is dCTP + H2O + H(+) = dUTP + NH4(+). It participates in pyrimidine metabolism; dUMP biosynthesis; dUMP from dCTP (dUTP route): step 1/2. Functionally, catalyzes the deamination of dCTP to dUTP. The polypeptide is dCTP deaminase (Bordetella pertussis (strain Tohama I / ATCC BAA-589 / NCTC 13251)).